Consider the following 541-residue polypeptide: MAGAIIENMSTKKLCIVGGILLVFQIVAFLVGGLIAPAPTTAVSYVAAKCVDVRKNHHKTRWLMPWGPNKCNKINDFEEAIPREIEANDIVFSVHIPLPSMEMSPWFQFMLFILQIDIAFKLNNQIRENAEVSMDVSLGYRDDMFSEWTEMAHERVPRKLRCTFTSPKTPEHEGRHYECDVLPFMEIGSVAHKYYLLNIRLPVNEKKKINVGIGEIKDIRLVGIHQNGGFTKVWFAMKTFLTPSIFIIMVWYWRRITMMSRPPVLLEKVIFALGISMTFINIPVEWFSIGFDWTWMLLFGDIRQGIFYAMLLSFWIIFCGEHMMDQHERNHIAGYWKQVGPIAVGSFCLFIFDMCERGVQLTNPFYSIWTTDVGTELAMAFIIVAGICLCLYFLFLCFMVFQVFRNISGKQSSLPAMSKVRRLHYEGLIFRFKFLMLITLACAAMTVIFFIVSQVTEGHWKWGGVTVQVSSAFFTGIYGMWNLYVFALMFLYAPSHKNYGEDQSNGDLGVHSGEELQLTTTITHVDGPTEIYKLTRKEAQE.

Residues 1–15 (MAGAIIENMSTKKLC) lie on the Cytoplasmic side of the membrane. Residues 16–36 (IVGGILLVFQIVAFLVGGLIA) traverse the membrane as a helical segment. Residues 37-232 (PAPTTAVSYV…GIHQNGGFTK (196 aa)) lie on the Lumenal side of the membrane. The interaction with Wnt proteins stretch occupies residues 101–202 (MEMSPWFQFM…KYYLLNIRLP (102 aa)). A helical transmembrane segment spans residues 233–253 (VWFAMKTFLTPSIFIIMVWYW). Over 254-268 (RRITMMSRPPVLLEK) the chain is Cytoplasmic. A helical transmembrane segment spans residues 269–289 (VIFALGISMTFINIPVEWFSI). Residues 290 to 303 (GFDWTWMLLFGDIR) are Lumenal-facing. The helical transmembrane segment at 304-324 (QGIFYAMLLSFWIIFCGEHMM) threads the bilayer. At 325 to 331 (DQHERNH) the chain is on the cytoplasmic side. The chain crosses the membrane as a helical span at residues 332–352 (IAGYWKQVGPIAVGSFCLFIF). At 353–380 (DMCERGVQLTNPFYSIWTTDVGTELAMA) the chain is on the lumenal side. The chain crosses the membrane as a helical span at residues 381–401 (FIIVAGICLCLYFLFLCFMVF). At 402-431 (QVFRNISGKQSSLPAMSKVRRLHYEGLIFR) the chain is on the cytoplasmic side. A helical membrane pass occupies residues 432–452 (FKFLMLITLACAAMTVIFFIV). At 453-471 (SQVTEGHWKWGGVTVQVSS) the chain is on the lumenal side. A helical membrane pass occupies residues 472–492 (AFFTGIYGMWNLYVFALMFLY). Topologically, residues 493-541 (APSHKNYGEDQSNGDLGVHSGEELQLTTTITHVDGPTEIYKLTRKEAQE) are cytoplasmic.

It belongs to the wntless family. As to quaternary structure, interacts with WNT3A. Interacts with WNT1, WNT3 and WNT5A. N-glycosylated. Expressed in the brain, skeletal muscle, heart muscle, lung, gut, liver, and kidney (at protein level). In the brain, expressed in the cortex, striatum, ventral tegmentum, nucleus accumbens and to a lesser extent in the Purkinjie cells in the cerebellum. Expressed in eye iridocorneal angle.

The protein localises to the golgi apparatus membrane. It localises to the cytoplasmic vesicle membrane. It is found in the cell membrane. Its subcellular location is the endoplasmic reticulum membrane. The protein resides in the early endosome membrane. In terms of biological role, regulates Wnt proteins sorting and secretion in a feedback regulatory mechanism. This reciprocal interaction plays a key role in the regulation of expression, subcellular location, binding and organelle-specific association of Wnt proteins. Also plays an important role in establishment of the anterior-posterior body axis formation during development. In Rattus norvegicus (Rat), this protein is Protein wntless homolog (Wls).